The sequence spans 226 residues: MHIMEGFLPVEHAIGWSVASAPVVAYGLYSINKKIKKNPEQRMLLGVAAAFTFVLSALKMPSVTGSCSHPTGTGLGAILFGPSAVAPIGAVVLLFQALLLAHGGLTTLGANIFSMAIVGPFAAAAVFRLARAARFPFGVGVFLAASLGDLLTYVTTACQLAFAFPDPVGGFTASLAKFAGVFALTQIPLAISEGLLTVVVMNALLRFNREELGSLNIEGNGQEVQA.

Helical transmembrane passes span 6 to 26 (GFLPVEHAIGWSVASAPVVAY), 43 to 63 (MLLGVAAAFTFVLSALKMPSV), 75 to 95 (LGAILFGPSAVAPIGAVVLLF), 107 to 127 (TLGANIFSMAIVGPFAAAAVF), 135 to 155 (FPFGVGVFLAASLGDLLTYVT), and 181 to 201 (VFALTQIPLAISEGLLTVVVM).

The protein belongs to the CbiM family. In terms of assembly, forms an energy-coupling factor (ECF) transporter complex composed of an ATP-binding protein (A component, CbiO), a transmembrane protein (T component, CbiQ) and 2 possible substrate-capture proteins (S components, CbiM and CbiN) of unknown stoichimetry.

It is found in the cell inner membrane. The protein operates within cofactor biosynthesis; adenosylcobalamin biosynthesis. In terms of biological role, part of the energy-coupling factor (ECF) transporter complex CbiMNOQ involved in cobalt import. The polypeptide is Cobalt transport protein CbiM 2 (Pelobacter propionicus (strain DSM 2379 / NBRC 103807 / OttBd1)).